Here is a 393-residue protein sequence, read N- to C-terminus: Formate-dependent phosphoribosylglycinamide formyltransferase (393 aa).

N(1)-(5-phospho-beta-D-ribosyl)glycinamide-binding positions include 22 to 23 and Glu82; that span reads EL. Residues Arg114, Lys155, 160–165, 195–198, and Glu203 contribute to the ATP site; these read SSGKGQ and EGFV. One can recognise an ATP-grasp domain in the interval 119 to 308; it reads RLAAEELGLP…EFALHVRAFT (190 aa). 2 residues coordinate Mg(2+): Glu267 and Glu279. Residues Asp286, Lys356, and 363 to 364 contribute to the N(1)-(5-phospho-beta-D-ribosyl)glycinamide site; that span reads RR.

This sequence belongs to the PurK/PurT family. As to quaternary structure, homodimer.

It carries out the reaction N(1)-(5-phospho-beta-D-ribosyl)glycinamide + formate + ATP = N(2)-formyl-N(1)-(5-phospho-beta-D-ribosyl)glycinamide + ADP + phosphate + H(+). It functions in the pathway purine metabolism; IMP biosynthesis via de novo pathway; N(2)-formyl-N(1)-(5-phospho-D-ribosyl)glycinamide from N(1)-(5-phospho-D-ribosyl)glycinamide (formate route): step 1/1. In terms of biological role, involved in the de novo purine biosynthesis. Catalyzes the transfer of formate to 5-phospho-ribosyl-glycinamide (GAR), producing 5-phospho-ribosyl-N-formylglycinamide (FGAR). Formate is provided by PurU via hydrolysis of 10-formyl-tetrahydrofolate. This Vibrio cholerae serotype O1 (strain M66-2) protein is Formate-dependent phosphoribosylglycinamide formyltransferase.